Reading from the N-terminus, the 345-residue chain is UDP-N-acetylenolpyruvoylglucosamine reductase (345 aa).

One can recognise an FAD-binding PCMH-type domain in the interval 16–186 (LSVSASCIKV…TAVGIFLKKE (171 aa)). Residue arginine 162 is part of the active site. Residue serine 232 is the Proton donor of the active site. Glutamate 328 is a catalytic residue.

It belongs to the MurB family. Requires FAD as cofactor.

It is found in the cytoplasm. The enzyme catalyses UDP-N-acetyl-alpha-D-muramate + NADP(+) = UDP-N-acetyl-3-O-(1-carboxyvinyl)-alpha-D-glucosamine + NADPH + H(+). It functions in the pathway cell wall biogenesis; peptidoglycan biosynthesis. Cell wall formation. This chain is UDP-N-acetylenolpyruvoylglucosamine reductase, found in Pectobacterium atrosepticum (strain SCRI 1043 / ATCC BAA-672) (Erwinia carotovora subsp. atroseptica).